The primary structure comprises 162 residues: ATP synthase subunit b 1 (162 aa).

Residues 3–23 (FLDATFFAFVGLVLFLALVVY) traverse the membrane as a helical segment.

The protein belongs to the ATPase B chain family. F-type ATPases have 2 components, F(1) - the catalytic core - and F(0) - the membrane proton channel. F(1) has five subunits: alpha(3), beta(3), gamma(1), delta(1), epsilon(1). F(0) has three main subunits: a(1), b(2) and c(10-14). The alpha and beta chains form an alternating ring which encloses part of the gamma chain. F(1) is attached to F(0) by a central stalk formed by the gamma and epsilon chains, while a peripheral stalk is formed by the delta and b chains.

It is found in the cell inner membrane. In terms of biological role, f(1)F(0) ATP synthase produces ATP from ADP in the presence of a proton or sodium gradient. F-type ATPases consist of two structural domains, F(1) containing the extramembraneous catalytic core and F(0) containing the membrane proton channel, linked together by a central stalk and a peripheral stalk. During catalysis, ATP synthesis in the catalytic domain of F(1) is coupled via a rotary mechanism of the central stalk subunits to proton translocation. Its function is as follows. Component of the F(0) channel, it forms part of the peripheral stalk, linking F(1) to F(0). This chain is ATP synthase subunit b 1, found in Rhizobium johnstonii (strain DSM 114642 / LMG 32736 / 3841) (Rhizobium leguminosarum bv. viciae).